Reading from the N-terminus, the 447-residue chain is MRSSTLQDPRRRDPQDDVYVDITDRLRFAILYSRPKSASNVHYFSIDNELEYENFSEDFGPLNLAMVYRYCCKINKKLKSITMLRKKIVHFTGSDQRKQANAAFLVGCYMVIYLGRTPEAAYRILIFGDTPYIPFRDAAYGSCNFYITLLDCFHAVKKAMQYGFLNFNSFNLDEYEHYEKAENGDLNWIIPDRFIAFCGPHSRARLESGYHQHSPETYIQYFKNHNVTTIIRLNKRMYDAKRFTDAGFDHHDLFFADGSTPTDAIVKRFLDICENAEGAIAVHCKAGLGRTGTLIACYIMKHYRMTAAETIAWVRICRPGLVIGPQQQFLVMKQTSLWLEGDYFRQRLKGQENGQHRAAFSKLLSGVDDISINGVENQDQQEPKPYSDDDEINGVTQGDRSRALKRRRQSKTNDILLPSPLAVLTFTLCSVVIWWIVCDYILPILLF.

Residues 14–168 (PQDDVYVDIT…AMQYGFLNFN (155 aa)) form an a region. The segment at 169 to 182 (SFNLDEYEHYEKAE) is linker. The interval 183-349 (NGDLNWIIPD…EGDYFRQRLK (167 aa)) is b. The Tyrosine-protein phosphatase domain occupies 184–344 (GDLNWIIPDR…TSLWLEGDYF (161 aa)). Residue Cys284 is the Phosphocysteine intermediate of the active site. The helical transmembrane segment at 426–446 (FTLCSVVIWWIVCDYILPILL) threads the bilayer.

The protein belongs to the protein-tyrosine phosphatase family. Non-receptor class CDC14 subfamily.

It localises to the endoplasmic reticulum membrane. The enzyme catalyses O-phospho-L-tyrosyl-[protein] + H2O = L-tyrosyl-[protein] + phosphate. It carries out the reaction O-phospho-L-seryl-[protein] + H2O = L-seryl-[protein] + phosphate. The catalysed reaction is O-phospho-L-threonyl-[protein] + H2O = L-threonyl-[protein] + phosphate. In terms of biological role, dual-specificity phosphatase. Preferentially dephosphorylates proteins modified by proline-directed kinases. The sequence is that of Dual specificity protein phosphatase CDC14C from Homo sapiens (Human).